The primary structure comprises 195 residues: Putative deoxynucleoside kinase (195 aa).

This chain is Putative deoxynucleoside kinase, found in Frog virus 3 (isolate Goorha) (FV-3).